The primary structure comprises 77 residues: Acyl carrier protein (77 aa).

Residues 2–77 (SDVADRVKKI…DAVKFISEAS (76 aa)) enclose the Carrier domain. Residue S37 is modified to O-(pantetheine 4'-phosphoryl)serine.

This sequence belongs to the acyl carrier protein (ACP) family. 4'-phosphopantetheine is transferred from CoA to a specific serine of apo-ACP by AcpS. This modification is essential for activity because fatty acids are bound in thioester linkage to the sulfhydryl of the prosthetic group.

Its subcellular location is the cytoplasm. It functions in the pathway lipid metabolism; fatty acid biosynthesis. Its function is as follows. Carrier of the growing fatty acid chain in fatty acid biosynthesis. The chain is Acyl carrier protein from Ruegeria pomeroyi (strain ATCC 700808 / DSM 15171 / DSS-3) (Silicibacter pomeroyi).